The following is a 464-amino-acid chain: Asparagine--tRNA ligase (464 aa).

This sequence belongs to the class-II aminoacyl-tRNA synthetase family. As to quaternary structure, homodimer.

The protein resides in the cytoplasm. The catalysed reaction is tRNA(Asn) + L-asparagine + ATP = L-asparaginyl-tRNA(Asn) + AMP + diphosphate + H(+). The chain is Asparagine--tRNA ligase from Clostridium beijerinckii (strain ATCC 51743 / NCIMB 8052) (Clostridium acetobutylicum).